The sequence spans 120 residues: Lysozyme (120 aa).

The C-type lysozyme domain maps to K1–C120. Disulfide bonds link C6/C120, C27/C110, C62/C76, and C72/C90. Residues E32 and D50 contribute to the active site.

It belongs to the glycosyl hydrolase 22 family. In terms of assembly, monomer.

The catalysed reaction is Hydrolysis of (1-&gt;4)-beta-linkages between N-acetylmuramic acid and N-acetyl-D-glucosamine residues in a peptidoglycan and between N-acetyl-D-glucosamine residues in chitodextrins.. Its function is as follows. Lysozymes have primarily a bacteriolytic function; those in tissues and body fluids are associated with the monocyte-macrophage system and enhance the activity of immunoagents. In Antheraea mylitta (Tasar silkworm), this protein is Lysozyme.